Consider the following 72-residue polypeptide: Protein CYSTEINE-RICH TRANSMEMBRANE MODULE 9 (72 aa).

Positions Met-1–Tyr-22 are enriched in polar residues. The disordered stretch occupies residues Met-1 to Glu-46. A helical membrane pass occupies residues Ser-49–Cys-65.

Belongs to the CYSTM1 family. Heterodimers. Interacts with WIH1/CYSTM13. As to expression, mostly expressed in roots and flowers and, to a lower extent, in stems, siliques and leaves.

Its subcellular location is the cell membrane. It localises to the nucleus. Involved in resistance to abiotic stress. This Arabidopsis thaliana (Mouse-ear cress) protein is Protein CYSTEINE-RICH TRANSMEMBRANE MODULE 9.